A 566-amino-acid chain; its full sequence is Chaperone ric-8 (566 aa).

It belongs to the synembryn family. As to quaternary structure, interacts with GDP-bound G-alpha proteins goa-1 and gpa-16. Does not interact with G-alpha proteins when they are in complex with subunits beta and gamma. In terms of tissue distribution, present throughout the nervous system in juveniles and adults (at protein level).

It is found in the cytoplasm. The protein localises to the cell cortex. In terms of biological role, chaperone that specifically binds and folds some, but not all, nascent G alpha proteins prior to G protein heterotrimer formation, promoting their stability and activity. Also acts as a guanine nucleotide exchange factor (GEF) for G alpha proteins by stimulating exchange of bound GDP for free GTP. Able to facilitate synaptic transmission in the nervous system probably by activating G(q)-alpha (egl-30). Also able to activate the G(s)-alpha in synaptic signaling network. Plays a key role in asymmetric spindle positioning, a step for asymmetric cell division that generates cell diversity during development by activating G(i)-alpha protein goa-1 and gpa-16 independently of G-protein coupled receptors. While it acts as a GEF for goa-1, it has no GEF activity toward gpa-16. In addition to its GEF activity, it is required for cortical subcellular localization of G-alpha proteins such as gpa-16. Also required for the interaction of goa-1 and gpr-1/2, suggesting that it may act by generating G-alpha proteins free from G-beta-gamma subunits, enabling gpr-1/2 to mediate asymmetric cell division. The sequence is that of Chaperone ric-8 (ric-8) from Caenorhabditis elegans.